Consider the following 308-residue polypeptide: Ornithine carbamoyltransferase (308 aa).

Carbamoyl phosphate is bound by residues serine 55 to threonine 58, glutamine 82, arginine 106, and histidine 133 to glutamine 136. L-ornithine-binding positions include asparagine 164, aspartate 227, and serine 231–methionine 232. Carbamoyl phosphate is bound by residues cysteine 267 to leucine 268 and arginine 295.

The protein belongs to the aspartate/ornithine carbamoyltransferase superfamily. OTCase family.

It is found in the cytoplasm. The catalysed reaction is carbamoyl phosphate + L-ornithine = L-citrulline + phosphate + H(+). Its pathway is amino-acid biosynthesis; L-arginine biosynthesis; L-arginine from L-ornithine and carbamoyl phosphate: step 1/3. In terms of biological role, reversibly catalyzes the transfer of the carbamoyl group from carbamoyl phosphate (CP) to the N(epsilon) atom of ornithine (ORN) to produce L-citrulline. The protein is Ornithine carbamoyltransferase of Prochlorococcus marinus subsp. pastoris (strain CCMP1986 / NIES-2087 / MED4).